Consider the following 327-residue polypeptide: Methionyl-tRNA formyltransferase (327 aa).

A (6S)-5,6,7,8-tetrahydrofolate-binding site is contributed by 121 to 124; it reads SLLP.

This sequence belongs to the Fmt family.

The enzyme catalyses L-methionyl-tRNA(fMet) + (6R)-10-formyltetrahydrofolate = N-formyl-L-methionyl-tRNA(fMet) + (6S)-5,6,7,8-tetrahydrofolate + H(+). Functionally, attaches a formyl group to the free amino group of methionyl-tRNA(fMet). The formyl group appears to play a dual role in the initiator identity of N-formylmethionyl-tRNA by promoting its recognition by IF2 and preventing the misappropriation of this tRNA by the elongation apparatus. The polypeptide is Methionyl-tRNA formyltransferase (Burkholderia mallei (strain ATCC 23344)).